Here is a 399-residue protein sequence, read N- to C-terminus: uncharacterized protein (399 aa).

Transmembrane regions (helical) follow at residues 26–46 (LLTI…ISLG), 266–286 (VITI…AVGI), 301–321 (IGIL…FVVE), 324–344 (FLGL…AEVI), and 358–378 (AWIS…VGVI).

It belongs to the ABC-4 integral membrane protein family.

The protein localises to the cell membrane. This is an uncharacterized protein from Methanocaldococcus jannaschii (strain ATCC 43067 / DSM 2661 / JAL-1 / JCM 10045 / NBRC 100440) (Methanococcus jannaschii).